Reading from the N-terminus, the 332-residue chain is MGHKKTVSIIGAGNVGEHIASLLVLKGAVNIRLFDLPKKDGEKLYAHVKGKALDMLQMACALGIDTDISGFVVDQNGNGYEALEGSDIVVITAGFPRKPGMSRDDLLGINISIMNTISEQIKKYAKNSIVIVVTNPVDIMTYAVYKLLGCNRKRVIGMAGVLDSSRFRTFISLELNVSPKDVHAYVIGGHGDEMVPLAGVSNVGGIPISTLIDEKKIKELVERTRFGGGEIVDYMGTSAYHAPAASVVEMIESVALNAKRVLTCSVLLDEEASKYYEAENLCVGVPVKLGENGVEKIVKVPMTDFERDLWMKSVASVKKNIAIADEFVSKYI.

Residues 11–16 (GAGNVG) and aspartate 35 each bind NAD(+). Positions 97 and 103 each coordinate substrate. NAD(+) contacts are provided by residues asparagine 110 and 133–135 (VTN). The substrate site is built by asparagine 135 and arginine 166. Histidine 190 (proton acceptor) is an active-site residue.

The protein belongs to the LDH/MDH superfamily. MDH type 3 family.

It catalyses the reaction (S)-malate + NAD(+) = oxaloacetate + NADH + H(+). Functionally, catalyzes the reversible oxidation of malate to oxaloacetate. The polypeptide is Malate dehydrogenase (Hydrogenobaculum sp. (strain Y04AAS1)).